Consider the following 863-residue polypeptide: DNA mismatch repair protein MutS (863 aa).

607–614 contributes to the ATP binding site; that stretch reads GPNMAGKS.

It belongs to the DNA mismatch repair MutS family.

In terms of biological role, this protein is involved in the repair of mismatches in DNA. It is possible that it carries out the mismatch recognition step. This protein has a weak ATPase activity. This is DNA mismatch repair protein MutS from Caldicellulosiruptor saccharolyticus (strain ATCC 43494 / DSM 8903 / Tp8T 6331).